A 144-amino-acid polypeptide reads, in one-letter code: Maximins 7/H1 (144 aa).

An N-terminal signal peptide occupies residues 1–18 (MNFKYIVAVSFLIASAYA). The propeptide occupies 19–43 (RSEENDEQSLSQRDVLEEESLREIR). Asn-70 is modified (asparagine amide). A propeptide spanning residues 74 to 123 (TAEDHEVMKRLEAVMRDLDSLDYPEEAAERETRGFNQEEIANLFTKKEKR) is cleaved from the precursor. Leucine amide is present on Leu-143.

Belongs to the bombinin family. Expressed by the skin glands.

Its subcellular location is the secreted. Maximin-7 shows antimicrobial activity against bacteria and against the fungus C.albicans. It has little hemolytic activity. Functionally, maximin-H1 shows antibacterial activity against both Gram-positive and Gram-negative bacteria. It also shows antimicrobial activity against the fungus C.albicans. Shows strong hemolytic activity. The protein is Maximins 7/H1 of Bombina maxima (Giant fire-bellied toad).